Consider the following 156-residue polypeptide: Crossover junction endodeoxyribonuclease RuvC (156 aa).

Catalysis depends on residues D7, E67, and D139. Positions 7, 67, and 139 each coordinate Mg(2+).

Belongs to the RuvC family. As to quaternary structure, homodimer which binds Holliday junction (HJ) DNA. The HJ becomes 2-fold symmetrical on binding to RuvC with unstacked arms; it has a different conformation from HJ DNA in complex with RuvA. In the full resolvosome a probable DNA-RuvA(4)-RuvB(12)-RuvC(2) complex forms which resolves the HJ. Mg(2+) serves as cofactor.

Its subcellular location is the cytoplasm. It catalyses the reaction Endonucleolytic cleavage at a junction such as a reciprocal single-stranded crossover between two homologous DNA duplexes (Holliday junction).. Its function is as follows. The RuvA-RuvB-RuvC complex processes Holliday junction (HJ) DNA during genetic recombination and DNA repair. Endonuclease that resolves HJ intermediates. Cleaves cruciform DNA by making single-stranded nicks across the HJ at symmetrical positions within the homologous arms, yielding a 5'-phosphate and a 3'-hydroxyl group; requires a central core of homology in the junction. The consensus cleavage sequence is 5'-(A/T)TT(C/G)-3'. Cleavage occurs on the 3'-side of the TT dinucleotide at the point of strand exchange. HJ branch migration catalyzed by RuvA-RuvB allows RuvC to scan DNA until it finds its consensus sequence, where it cleaves and resolves the cruciform DNA. This chain is Crossover junction endodeoxyribonuclease RuvC, found in Sphingopyxis alaskensis (strain DSM 13593 / LMG 18877 / RB2256) (Sphingomonas alaskensis).